Reading from the N-terminus, the 450-residue chain is tRNA modification GTPase MnmE (450 aa).

(6S)-5-formyl-5,6,7,8-tetrahydrofolate-binding residues include Arg23, Glu79, and Lys118. Positions 214–374 constitute a TrmE-type G domain; it reads GITLILVGKP…LKEHILNKVG (161 aa). K(+) is bound at residue Asn224. GTP-binding positions include 224 to 229, 243 to 249, and 268 to 271; these read NAGKSS, TSIAGTT, and DTAG. Ser228 is a Mg(2+) binding site. Positions 243, 245, and 248 each coordinate K(+). Thr249 is a binding site for Mg(2+). A (6S)-5-formyl-5,6,7,8-tetrahydrofolate-binding site is contributed by Lys450.

This sequence belongs to the TRAFAC class TrmE-Era-EngA-EngB-Septin-like GTPase superfamily. TrmE GTPase family. In terms of assembly, homodimer. Heterotetramer of two MnmE and two MnmG subunits. K(+) is required as a cofactor.

Its subcellular location is the cytoplasm. Functionally, exhibits a very high intrinsic GTPase hydrolysis rate. Involved in the addition of a carboxymethylaminomethyl (cmnm) group at the wobble position (U34) of certain tRNAs, forming tRNA-cmnm(5)s(2)U34. This is tRNA modification GTPase MnmE from Francisella tularensis subsp. holarctica (strain FTNF002-00 / FTA).